Here is a 315-residue protein sequence, read N- to C-terminus: Leucine-rich repeat-containing protein 75B (315 aa).

The tract at residues 1-23 (MGARLGRRAGPEAGSEAGAAAGC) is disordered. Residues 11–23 (PEAGSEAGAAAGC) show a composition bias toward low complexity. 2 LRR repeats span residues 182–195 (LAVL…LSDE) and 207–220 (LPRL…GNRL). Residues 284 to 315 (PEGSAAGATTPASTWDSTAAGLGPEPQACCAR) form a disordered region. The span at 286-297 (GSAAGATTPAST) shows a compositional bias: low complexity.

Belongs to the LRRC75 family.

Functionally, may suppress myogenic differentiation by modulating MYOG expression and Erk1/2 signaling. This chain is Leucine-rich repeat-containing protein 75B, found in Homo sapiens (Human).